A 237-amino-acid chain; its full sequence is Pyridoxal 5'-phosphate synthase subunit PdxS (237 aa).

Lysine 19 (schiff-base intermediate with D-ribose 5-phosphate) is an active-site residue. Glycine 91 lines the D-ribose 5-phosphate pocket. Arginine 103 is a D-glyceraldehyde 3-phosphate binding site. Residues glycine 157 and 178–179 (GS) contribute to the D-ribose 5-phosphate site.

It belongs to the PdxS/SNZ family. As to quaternary structure, in the presence of PdxT, forms a dodecamer of heterodimers.

It carries out the reaction aldehydo-D-ribose 5-phosphate + D-glyceraldehyde 3-phosphate + L-glutamine = pyridoxal 5'-phosphate + L-glutamate + phosphate + 3 H2O + H(+). Its pathway is cofactor biosynthesis; pyridoxal 5'-phosphate biosynthesis. In terms of biological role, catalyzes the formation of pyridoxal 5'-phosphate from ribose 5-phosphate (RBP), glyceraldehyde 3-phosphate (G3P) and ammonia. The ammonia is provided by the PdxT subunit. Can also use ribulose 5-phosphate and dihydroxyacetone phosphate as substrates, resulting from enzyme-catalyzed isomerization of RBP and G3P, respectively. The polypeptide is Pyridoxal 5'-phosphate synthase subunit PdxS (Methanococcus vannielii).